A 282-amino-acid polypeptide reads, in one-letter code: Leucine-rich protein (282 aa).

Its function is as follows. Not essential for viability or growth. Nevertheless, uncontrolled production in E.coli is detrimental to the normal physiology of the bacteria. The chain is Leucine-rich protein (lrp) from Streptococcus dysgalactiae subsp. equisimilis (Streptococcus equisimilis).